Consider the following 813-residue polypeptide: G-type lectin S-receptor-like serine/threonine-protein kinase LECRK1 (813 aa).

The N-terminal stretch at 1 to 19 (MVALLLFPMLLQLLSPTCA) is a signal peptide. Residues 20-466 (QTQKNITLGS…NRKHWVLGSS (447 aa)) lie on the Extracellular side of the membrane. Residues 22–149 (QKNITLGSTL…DGTTKWQTFD (128 aa)) form the Bulb-type lectin domain. N-linked (GlcNAc...) asparagine glycans are attached at residues Asn-24, Asn-57, Asn-164, Asn-168, Asn-219, and Asn-242. The EGF-like; atypical domain occupies 293 to 346 (PQNICHAIVSDVGSGVCGFNSYCTFDGTRNQIASCQCPPWYKFFDEQKKYKGCK). Intrachain disulfides connect Cys-297/Cys-315, Cys-309/Cys-327, Cys-329/Cys-345, Cys-391/Cys-413, and Cys-395/Cys-401. The region spanning 354–433 (CDLDEATALA…NMADYVQRTV (80 aa)) is the PAN domain. N-linked (GlcNAc...) asparagine glycans are attached at residues Asn-407 and Asn-441. A helical transmembrane segment spans residues 467 to 487 (LILGTSILVNFALISIFLFGT). Residues 488–813 (YCRIATKKNI…DPCSFISSLP (326 aa)) lie on the Cytoplasmic side of the membrane. In terms of domain architecture, Protein kinase spans 523–797 (AGFHEILGAG…KVTQMLDGAV (275 aa)). ATP-binding positions include 529–537 (LGAGASGVV) and Lys-553. Asp-647 functions as the Proton acceptor in the catalytic mechanism.

This sequence belongs to the protein kinase superfamily. Ser/Thr protein kinase family.

Its subcellular location is the membrane. It carries out the reaction L-seryl-[protein] + ATP = O-phospho-L-seryl-[protein] + ADP + H(+). The catalysed reaction is L-threonyl-[protein] + ATP = O-phospho-L-threonyl-[protein] + ADP + H(+). Its function is as follows. Involved in innate immunity. Required for the expression of defense-related genes PR1A, LOX2 and CHS1 upon biotic stresses. Required for basal resistance to the fungal blast (M.grisea), bacterial blight (X.oryzae pv. oryzae, Xoo) and the herbivorous insect brown planthopper (N.lugens, BPH). May be involved in several defense signaling pathways. Involved in the promotion of seed germination. Required for the expression of alpha-amylase genes during seed germination. Involved in resistance against the herbivorous insect brown planthopper (N.lugens, BPH). Member of the BPH3 (BPH resistance locus 3) cluster which contains LECRK1, LECRK2 and LECRK3. This is G-type lectin S-receptor-like serine/threonine-protein kinase LECRK1 from Oryza sativa subsp. japonica (Rice).